The chain runs to 195 residues: Imidazoleglycerol-phosphate dehydratase (195 aa).

Belongs to the imidazoleglycerol-phosphate dehydratase family.

It localises to the cytoplasm. It carries out the reaction D-erythro-1-(imidazol-4-yl)glycerol 3-phosphate = 3-(imidazol-4-yl)-2-oxopropyl phosphate + H2O. It participates in amino-acid biosynthesis; L-histidine biosynthesis; L-histidine from 5-phospho-alpha-D-ribose 1-diphosphate: step 6/9. The sequence is that of Imidazoleglycerol-phosphate dehydratase from Dechloromonas aromatica (strain RCB).